We begin with the raw amino-acid sequence, 183 residues long: Ribosome-recycling factor (183 aa).

It belongs to the RRF family.

Its subcellular location is the cytoplasm. In terms of biological role, responsible for the release of ribosomes from messenger RNA at the termination of protein biosynthesis. May increase the efficiency of translation by recycling ribosomes from one round of translation to another. This is Ribosome-recycling factor from Bifidobacterium longum subsp. infantis (strain ATCC 15697 / DSM 20088 / JCM 1222 / NCTC 11817 / S12).